The sequence spans 420 residues: LanC-like protein 3 homolog (420 aa).

It belongs to the LanC-like protein family.

This Drosophila pseudoobscura pseudoobscura (Fruit fly) protein is LanC-like protein 3 homolog.